A 395-amino-acid chain; its full sequence is D-serine dehydratase (395 aa).

An N6-(pyridoxal phosphate)lysine modification is found at Lys-46. Residues Tyr-184, Tyr-191, Thr-232, Gly-254, and Asn-255 each coordinate pyridoxal 5'-phosphate. Residues His-365 and Cys-367 each contribute to the Zn(2+) site.

Belongs to the DSD1 family. Pyridoxal 5'-phosphate is required as a cofactor. Zn(2+) serves as cofactor.

It catalyses the reaction D-serine = pyruvate + NH4(+). In terms of biological role, catalyzes the conversion of D-serine to pyruvate and ammonia. Plays a role in D-serine detoxification. In Dictyostelium discoideum (Social amoeba), this protein is D-serine dehydratase.